Consider the following 215-residue polypeptide: CASP-like protein UU3 (215 aa).

The Cytoplasmic portion of the chain corresponds to 1-44 (MATAWESEYFDKVTPGERERAVPPMVPQQTPPPVYIQPQVSRNG). Residues 45–65 (IVASIVLRLLTLIFAVVALAV) form a helical membrane-spanning segment. The Extracellular portion of the chain corresponds to 66–93 (LASNTGSFQVSTGSATSVKTIKFTILSA). A helical transmembrane segment spans residues 94–114 (FTYLFAVCGVVAVYSLLLIIV). At 115–128 (EMIDLAVRGFTTHT) the chain is on the cytoplasmic side. Residues 129-149 (LVAIFVFVLDQTMAYVLISAA) traverse the membrane as a helical segment. Topologically, residues 150–185 (SASANGVKVSRDESNITGYKFDISCSNLGIDDYCTK) are extracellular. Asparagine 164 carries N-linked (GlcNAc...) asparagine glycosylation. Residues 186–206 (ASASVAIAFIAFLFMAITAGV) form a helical membrane-spanning segment. Residues 207–215 (SARRLFKLP) lie on the Cytoplasmic side of the membrane.

The protein belongs to the Casparian strip membrane proteins (CASP) family. In terms of assembly, homodimer and heterodimers.

The protein localises to the cell membrane. The polypeptide is CASP-like protein UU3 (Physcomitrium patens (Spreading-leaved earth moss)).